A 539-amino-acid chain; its full sequence is MKENFIAALGMTVSASAKQHQVVDNPPVDIILIGGGVMSATLGTYLKALEPGWTIHMYERLEKTAEESSNGWNNAGTGHAAFCELNYTTLSPAGSVDISKAVAVNESFEISRQFWAYLVKQKILTNPQSFINNVPHMSFVWGEDNIRFLRQRFDALQTSTLFRGMEYSENPQQIREWAPLVMDGRDTFQKVAATRMAMGTDVNFGEMTQQLLAALQQYPQFHLHLQHDVVDIKRNADQTWSVRVADHSNGGRQSTVCARHVFIGGGGASLTLLQKSGIPEVNGYAGFPVGGQFLVATNPEVVGHHHAKVYGKASVGAPPMSVPHIDTRILDGKQALLFGPFATFSSKFLKRGSWLDLFHSLTRQNLLPMLRVGLDNFGLMRYLIGQLLMSDKDRLNALREYYPQATMADWSLIEAGQRVQVIKKDAGKGGILQFGTEVVSSADGSLSVLLGASPGASTAAPIMLELLASMFKEQVTTDAWQRKLKEMVPSYGQTINGNLALTNEIRLSTSEVLGLTYIEAKPLPGEPADGKWEGLQKAM.

The protein belongs to the MQO family. FAD serves as cofactor.

The enzyme catalyses (S)-malate + a quinone = a quinol + oxaloacetate. It functions in the pathway carbohydrate metabolism; tricarboxylic acid cycle; oxaloacetate from (S)-malate (quinone route): step 1/1. The polypeptide is Probable malate:quinone oxidoreductase (Sodalis glossinidius (strain morsitans)).